Consider the following 593-residue polypeptide: Vitamin H transporter (593 aa).

The Extracellular segment spans residues Met-1–Leu-121. A phosphoserine mark is found at Ser-32, Ser-33, and Ser-43. The helical transmembrane segment at Leu-122–Val-142 threads the bilayer. Residues Asp-143–Tyr-166 lie on the Cytoplasmic side of the membrane. Residues Val-167–Leu-187 form a helical membrane-spanning segment. Over Leu-188–Arg-190 the chain is Extracellular. The helical transmembrane segment at Phe-191 to Cys-211 threads the bilayer. Residues Tyr-212 to Arg-224 are Cytoplasmic-facing. A helical membrane pass occupies residues Phe-225–Trp-245. The Extracellular segment spans residues Tyr-246–Trp-291. A helical membrane pass occupies residues Met-292–Ile-312. Residues Pro-313–Lys-361 are Cytoplasmic-facing. A helical membrane pass occupies residues Val-362–Met-382. Residues Thr-383 to Ser-408 are Extracellular-facing. Residues Val-409–Phe-429 form a helical membrane-spanning segment. The Cytoplasmic segment spans residues Arg-430–Lys-432. The chain crosses the membrane as a helical span at residues Trp-433–Trp-453. Topologically, residues Asp-454–Lys-460 are extracellular. The helical transmembrane segment at Trp-461–Ile-481 threads the bilayer. Residues Asn-482–Lys-492 are Cytoplasmic-facing. Residues Ala-493–Leu-513 form a helical membrane-spanning segment. At Ala-514–Gly-526 the chain is on the extracellular side. A helical transmembrane segment spans residues Tyr-527–Phe-547. Residues Tyr-548–Ser-593 are Cytoplasmic-facing.

This sequence belongs to the major facilitator superfamily. Allantoate permease family.

Its subcellular location is the cell membrane. Involved in uptake of biotin with the concomitant entry of protons. This is Vitamin H transporter (VHT1) from Saccharomyces cerevisiae (strain ATCC 204508 / S288c) (Baker's yeast).